A 709-amino-acid polypeptide reads, in one-letter code: Polyribonucleotide nucleotidyltransferase (709 aa).

Positions 486 and 492 each coordinate Mg(2+). The KH domain maps to 553 to 612 (PRIHTIKINADKIKDVIGKGGSVIRALTEETGTTIEIEDDGTVKIAATSGEQAKQAIARI). The region spanning 622-690 (GRIYNGKVTR…RQGRIRLSMK (69 aa)) is the S1 motif domain. The disordered stretch occupies residues 690–709 (KEAQATQQEAAETSSEDPAN). The segment covering 691 to 702 (EAQATQQEAAET) has biased composition (low complexity).

The protein belongs to the polyribonucleotide nucleotidyltransferase family. In terms of assembly, component of the RNA degradosome, which is a multiprotein complex involved in RNA processing and mRNA degradation. Mg(2+) serves as cofactor.

It is found in the cytoplasm. It carries out the reaction RNA(n+1) + phosphate = RNA(n) + a ribonucleoside 5'-diphosphate. In terms of biological role, involved in mRNA degradation. Catalyzes the phosphorolysis of single-stranded polyribonucleotides processively in the 3'- to 5'-direction. The protein is Polyribonucleotide nucleotidyltransferase of Proteus mirabilis (strain HI4320).